The chain runs to 313 residues: Ribosomal RNA small subunit methyltransferase H (313 aa).

S-adenosyl-L-methionine-binding positions include 35–37, aspartate 55, phenylalanine 80, aspartate 102, and glutamine 109; that span reads GGH.

It belongs to the methyltransferase superfamily. RsmH family.

It is found in the cytoplasm. The enzyme catalyses cytidine(1402) in 16S rRNA + S-adenosyl-L-methionine = N(4)-methylcytidine(1402) in 16S rRNA + S-adenosyl-L-homocysteine + H(+). Specifically methylates the N4 position of cytidine in position 1402 (C1402) of 16S rRNA. This is Ribosomal RNA small subunit methyltransferase H from Shewanella sp. (strain MR-4).